Here is a 208-residue protein sequence, read N- to C-terminus: MVLDELISEFDRGLRSLTGISRMSRPVPAPADAPDAELTPAERTHAAGLMRVNHVGEVCAQALYQAQKLTARTASAKAMFEEAAREEEDHLAWTAHRLKELDSRPSLLNPLWYAGALAIGVAAGALGDKVSLGFMAETERQVESHLEGHMSELPATDTASRAIVDQMRIDEVKHGKAATDAGGIELPLPARMLMRAASKVMTSTAYYL.

Glutamate 57, glutamate 87, histidine 90, glutamate 139, glutamate 171, and histidine 174 together coordinate Fe cation.

Belongs to the COQ7 family. The cofactor is Fe cation.

It is found in the cell membrane. It carries out the reaction a 5-methoxy-2-methyl-3-(all-trans-polyprenyl)benzene-1,4-diol + AH2 + O2 = a 3-demethylubiquinol + A + H2O. It functions in the pathway cofactor biosynthesis; ubiquinone biosynthesis. Its function is as follows. Catalyzes the hydroxylation of 2-nonaprenyl-3-methyl-6-methoxy-1,4-benzoquinol during ubiquinone biosynthesis. The sequence is that of 3-demethoxyubiquinol 3-hydroxylase from Burkholderia cenocepacia (strain ATCC BAA-245 / DSM 16553 / LMG 16656 / NCTC 13227 / J2315 / CF5610) (Burkholderia cepacia (strain J2315)).